We begin with the raw amino-acid sequence, 90 residues long: NELL2-interacting cell ontogeny regulator 1 (90 aa).

An N-terminal signal peptide occupies residues 1–26 (MVSSGYLQAVMLLLAVQLLCFRPSDA).

This sequence belongs to the NICOL family.

The protein resides in the secreted. Its function is as follows. mRNA-binding protein which interacts with a range of target mRNAs and may promote extracellular matrix production. The chain is NELL2-interacting cell ontogeny regulator 1 from Salmo salar (Atlantic salmon).